The primary structure comprises 121 residues: RxLR effector protein PexRD2 (121 aa).

Positions 1 to 20 are cleaved as a signal peptide; that stretch reads MRLSYVIVVIATSFLVTTEA. The RxLR-dEER signature appears at 38 to 56; the sequence is RLLRKHYTAAENDDDSEAR. The WY domain stretch occupies residues 57-121; sequence ALNTEKMKTM…LNYVAEHTAV (65 aa).

This sequence belongs to the RxLR effector family. Homodimer. Interacts with host MAPKKK epsilon (via its kinase domain).

The protein resides in the secreted. It is found in the host cytoplasm. Its subcellular location is the host nucleus. Functionally, effector that enhances P.infestans colonization of Nicotiana benthamiana leaves. Induces a weak Cell death response in N.benthamiana. PexRD2-induced cell death is dependent on SGT1, suggesting that PexRD2 is recognized by the plant immune system. Interacts with the kinase domain of the host MAPKKK epsilon, a positive regulator of cell death associated with plant immunity, and perturbs signaling pathways triggered by MAPKKK epsilon. This Phytophthora infestans (strain T30-4) (Potato late blight agent) protein is RxLR effector protein PexRD2.